Reading from the N-terminus, the 278-residue chain is Large ribosomal subunit protein uL2 (278 aa).

Residues 222–264 (GVAMNPIDHPHGGGEGRTSGGRHPVTPWGKPTKGRKTRKNKAT) are disordered.

This sequence belongs to the universal ribosomal protein uL2 family. Part of the 50S ribosomal subunit. Forms a bridge to the 30S subunit in the 70S ribosome.

Its function is as follows. One of the primary rRNA binding proteins. Required for association of the 30S and 50S subunits to form the 70S ribosome, for tRNA binding and peptide bond formation. It has been suggested to have peptidyltransferase activity; this is somewhat controversial. Makes several contacts with the 16S rRNA in the 70S ribosome. The sequence is that of Large ribosomal subunit protein uL2 from Phenylobacterium zucineum (strain HLK1).